The primary structure comprises 453 residues: Ribosomal protein uS12 methylthiotransferase RimO (453 aa).

Residues 5–120 (PKVGFVSLGC…VMQAVHSHLP (116 aa)) form the MTTase N-terminal domain. The [4Fe-4S] cluster site is built by cysteine 14, cysteine 50, cysteine 79, cysteine 151, cysteine 155, and cysteine 158. In terms of domain architecture, Radical SAM core spans 137–383 (LTPRHYAYLK…EVAEEVSAHR (247 aa)). One can recognise a TRAM domain in the interval 385-453 (QRKVGKTLKV…ADGHDLWGEV (69 aa)).

This sequence belongs to the methylthiotransferase family. RimO subfamily. It depends on [4Fe-4S] cluster as a cofactor.

Its subcellular location is the cytoplasm. It catalyses the reaction L-aspartate(89)-[ribosomal protein uS12]-hydrogen + (sulfur carrier)-SH + AH2 + 2 S-adenosyl-L-methionine = 3-methylsulfanyl-L-aspartate(89)-[ribosomal protein uS12]-hydrogen + (sulfur carrier)-H + 5'-deoxyadenosine + L-methionine + A + S-adenosyl-L-homocysteine + 2 H(+). Catalyzes the methylthiolation of an aspartic acid residue of ribosomal protein uS12. This Burkholderia cenocepacia (strain ATCC BAA-245 / DSM 16553 / LMG 16656 / NCTC 13227 / J2315 / CF5610) (Burkholderia cepacia (strain J2315)) protein is Ribosomal protein uS12 methylthiotransferase RimO.